Reading from the N-terminus, the 159-residue chain is Bacterioferritin (159 aa).

Residues 1–145 (MQGDPDVLRL…TQLELMDKLG (145 aa)) enclose the Ferritin-like diiron domain. Fe cation is bound by residues Glu18 and Glu51. Met52 is a heme b binding site. Fe cation-binding residues include His54, Glu94, Glu127, and His130.

Belongs to the bacterioferritin family. In terms of assembly, homooligomer of 24 subunits, arranged as 12 dimers, that are packed together to form an approximately spherical molecule with a central cavity, in which large amounts of iron can be deposited. It depends on heme b as a cofactor.

The catalysed reaction is 4 Fe(2+) + O2 + 4 H(+) = 4 Fe(3+) + 2 H2O. The enzyme catalyses Fe(2+)(in) = Fe(2+)(out). In terms of biological role, iron-storage protein, whose ferroxidase center binds Fe(2+), oxidizes it using dioxygen to Fe(3+), and participates in the subsequent Fe(3+) oxide mineral core formation within the central cavity of the BFR protein shell. The polypeptide is Bacterioferritin (bfr) (Mycobacterium bovis (strain ATCC BAA-935 / AF2122/97)).